A 363-amino-acid polypeptide reads, in one-letter code: tRNA U34 carboxymethyltransferase (363 aa).

Residues Lys101, Trp134, Lys139, Gly159, 181–183 (DPS), 221–222 (LE), Met237, Tyr241, and Arg356 each bind carboxy-S-adenosyl-L-methionine.

The protein belongs to the class I-like SAM-binding methyltransferase superfamily. CmoB family. Homotetramer.

It catalyses the reaction carboxy-S-adenosyl-L-methionine + 5-hydroxyuridine(34) in tRNA = 5-carboxymethoxyuridine(34) in tRNA + S-adenosyl-L-homocysteine + H(+). In terms of biological role, catalyzes carboxymethyl transfer from carboxy-S-adenosyl-L-methionine (Cx-SAM) to 5-hydroxyuridine (ho5U) to form 5-carboxymethoxyuridine (cmo5U) at position 34 in tRNAs. This Psychrobacter cryohalolentis (strain ATCC BAA-1226 / DSM 17306 / VKM B-2378 / K5) protein is tRNA U34 carboxymethyltransferase.